The sequence spans 319 residues: MNREDFIKEPVEDIRVSERDTVADLIEKYCKVHGFTAADVCRAVEVLSEGLRNSDLRFLSFTANLVATGLRGLLAQMVRSGYFDVVVTTCGTLDHDVARSLGHKYYKGYFEADDVVLAKSDIHRLGNVFIPVENYGPPVERLVKDVLRELGKTMVAPYELIWEVGKRLSDENSILRAAWERKVPVIVPGITDGAFGTAIFTYSEELKLQGKDFCLDVLADEKLLSDMVFSSKRSAALVVGGGISKHHVIWWNQFKGGLDYAVYLTTAQEYDGSLSGARPREAITWGKLKPEGRSATVYGDATVLLPIIWAGVLAKVQKA.

K287 functions as the Nucleophile in the catalytic mechanism.

It belongs to the deoxyhypusine synthase family. It depends on NAD(+) as a cofactor.

It catalyses the reaction [eIF5A protein]-L-lysine + spermidine = [eIF5A protein]-deoxyhypusine + propane-1,3-diamine. It participates in protein modification; eIF5A hypusination. In terms of biological role, catalyzes the NAD-dependent oxidative cleavage of spermidine and the subsequent transfer of the butylamine moiety of spermidine to the epsilon-amino group of a specific lysine residue of the eIF-5A precursor protein to form the intermediate deoxyhypusine residue. The sequence is that of Probable deoxyhypusine synthase from Ignicoccus hospitalis (strain KIN4/I / DSM 18386 / JCM 14125).